A 397-amino-acid chain; its full sequence is Beta sliding clamp (397 aa).

Belongs to the beta sliding clamp family. In terms of assembly, forms a ring-shaped head-to-tail homodimer around DNA which binds and tethers DNA polymerases and other proteins to the DNA. The DNA replisome complex has a single clamp-loading complex (3 tau and 1 each of delta, delta', psi and chi subunits) which binds 3 Pol III cores (1 core on the leading strand and 2 on the lagging strand) each with a beta sliding clamp dimer. Additional proteins in the replisome are other copies of gamma, psi and chi, Ssb, DNA helicase and RNA primase.

It localises to the cytoplasm. In terms of biological role, confers DNA tethering and processivity to DNA polymerases and other proteins. Acts as a clamp, forming a ring around DNA (a reaction catalyzed by the clamp-loading complex) which diffuses in an ATP-independent manner freely and bidirectionally along dsDNA. Initially characterized for its ability to contact the catalytic subunit of DNA polymerase III (Pol III), a complex, multichain enzyme responsible for most of the replicative synthesis in bacteria; Pol III exhibits 3'-5' exonuclease proofreading activity. The beta chain is required for initiation of replication as well as for processivity of DNA replication. In Mycolicibacterium smegmatis (strain ATCC 700084 / mc(2)155) (Mycobacterium smegmatis), this protein is Beta sliding clamp (dnaN).